Here is a 109-residue protein sequence, read N- to C-terminus: Phosphoribosyl-ATP pyrophosphatase (109 aa).

The protein belongs to the PRA-PH family.

The protein localises to the cytoplasm. It carries out the reaction 1-(5-phospho-beta-D-ribosyl)-ATP + H2O = 1-(5-phospho-beta-D-ribosyl)-5'-AMP + diphosphate + H(+). Its pathway is amino-acid biosynthesis; L-histidine biosynthesis; L-histidine from 5-phospho-alpha-D-ribose 1-diphosphate: step 2/9. The sequence is that of Phosphoribosyl-ATP pyrophosphatase from Geobacter metallireducens (strain ATCC 53774 / DSM 7210 / GS-15).